The following is a 376-amino-acid chain: Mitogen-activated protein kinase 2 (376 aa).

A Protein kinase domain is found at 32 to 319 (YVPIKPIGRG…VTEALQHPYM (288 aa)). Residues 38-46 (IGRGAYGVV) and lysine 61 contribute to the ATP site. Aspartate 158 acts as the Proton acceptor in catalysis. Threonine 191 carries the phosphothreonine modification. Positions 191–193 (TEY) match the TXY motif. Residue tyrosine 193 is modified to Phosphotyrosine. A Phosphothreonine modification is found at threonine 196.

This sequence belongs to the protein kinase superfamily. CMGC Ser/Thr protein kinase family. MAP kinase subfamily. In terms of assembly, interacts with MKK3. Post-translationally, dually phosphorylated on Thr-191 and Tyr-193, which activates the enzyme. Phosphorylated on Ser residue. Highest levels in the stem. Present in the leaf, root and flower, but not in seeds.

The catalysed reaction is L-seryl-[protein] + ATP = O-phospho-L-seryl-[protein] + ADP + H(+). It carries out the reaction L-threonyl-[protein] + ATP = O-phospho-L-threonyl-[protein] + ADP + H(+). Its activity is regulated as follows. Activated by threonine and tyrosine phosphorylation. In Arabidopsis thaliana (Mouse-ear cress), this protein is Mitogen-activated protein kinase 2 (MPK2).